The following is a 164-amino-acid chain: ATP synthase subunit b (164 aa).

The chain crosses the membrane as a helical span at residues 6-26 (GELVGNFILVTGSVIVLLLLI).

Belongs to the ATPase B chain family. In terms of assembly, F-type ATPases have 2 components, F(1) - the catalytic core - and F(0) - the membrane proton channel. F(1) has five subunits: alpha(3), beta(3), gamma(1), delta(1), epsilon(1). F(0) has three main subunits: a(1), b(2) and c(10-14). The alpha and beta chains form an alternating ring which encloses part of the gamma chain. F(1) is attached to F(0) by a central stalk formed by the gamma and epsilon chains, while a peripheral stalk is formed by the delta and b chains.

It is found in the cell membrane. F(1)F(0) ATP synthase produces ATP from ADP in the presence of a proton or sodium gradient. F-type ATPases consist of two structural domains, F(1) containing the extramembraneous catalytic core and F(0) containing the membrane proton channel, linked together by a central stalk and a peripheral stalk. During catalysis, ATP synthesis in the catalytic domain of F(1) is coupled via a rotary mechanism of the central stalk subunits to proton translocation. In terms of biological role, component of the F(0) channel, it forms part of the peripheral stalk, linking F(1) to F(0). The polypeptide is ATP synthase subunit b (Streptococcus pyogenes serotype M1).